Consider the following 759-residue polypeptide: MAKTKGLPKDTAVTPSPHLRPHTADLNRLLAGEHHDPHSILGAHEYDDHTVIRAYRPHATEVAAVVGGERHVFTHLEAGVFAVTLPFTGLIDYRLEVGYDHGGDQPHIHHTADAYRFLPTLGEMDLHLFSEGRHERLWEVLGAHPRTFETPDGVVEGVSFAVWAPNANGVQLIGDFNHWDGNEAQLRVLGSTGVWELFWPDFPVDGLYKFRIHGADGVVSERADPMAFATEVPPQTASRVTTSSYTWNDDAWMTQRAAQNPVFEPMSTLEVHLMSWRPGLSYVELADQLTEYIVEHGFTHVEMLPVAEHPFGGSWGYQVTSYYAPTSRLGTPDEFRYLVDRLHQAGIGVIVDWVPAHFPKDAWALGRFDGTALYEHADPRRGEQLDWGTYVFDFGRAEVRNFLVANALYWLQEFHVDGLRVDAVASMLYLDYSRPEGGWTPNIYGGRENLEAVQFLQEMNATVHKASPGIVTIAEESTSWPGVTRPTNLGGLGFSMKWNMGWMNDTLAFISRDPIHRSYHHHEMTFSMLYAFSENYVLPISHDEVVHGKGTLWGRMLGDDHRKAAGVRQLLAYQWAHPGKQLLFQGQEFGQRAEWSEERGVDWYQLDENSYSGGILRMISDMNGIYTSHRALWSHDTSPEGYSWIDANDSTNNVLSFLRYGDDGSVLACVFNFSGSEHSQYRLGLPHAGTWREVLNTDAADYNGAGIGNYGAVQATDEPWHGRPASAVMVLPPLSALWFEPVAAEAPVVQEPPTAPPLS.

The tract at residues 1 to 22 (MAKTKGLPKDTAVTPSPHLRPH) is disordered. The active-site Nucleophile is the Asp422. The active-site Proton donor is Glu475.

It belongs to the glycosyl hydrolase 13 family. GlgB subfamily. Monomer.

It carries out the reaction Transfers a segment of a (1-&gt;4)-alpha-D-glucan chain to a primary hydroxy group in a similar glucan chain.. Its pathway is glycan biosynthesis; glycogen biosynthesis. In terms of biological role, catalyzes the formation of the alpha-1,6-glucosidic linkages in glycogen by scission of a 1,4-alpha-linked oligosaccharide from growing alpha-1,4-glucan chains and the subsequent attachment of the oligosaccharide to the alpha-1,6 position. The sequence is that of 1,4-alpha-glucan branching enzyme GlgB from Mycobacterium sp. (strain KMS).